The chain runs to 561 residues: Asparagine synthetase [glutamine-hydrolyzing] (561 aa).

Cysteine 2 (for GATase activity) is an active-site residue. Residues cysteine 2 to lysine 191 enclose the Glutamine amidotransferase type-2 domain. L-glutamine is bound by residues arginine 49–valine 53, asparagine 75–glutamate 77, and aspartate 97. In terms of domain architecture, Asparagine synthetase spans histidine 213–tyrosine 536. ATP contacts are provided by residues leucine 256, isoleucine 288, and serine 363–glycine 364. N6-acetyllysine is present on lysine 385. The residue at position 545 (threonine 545) is a Phosphothreonine. Serine 557 carries the phosphoserine modification.

It carries out the reaction L-aspartate + L-glutamine + ATP + H2O = L-asparagine + L-glutamate + AMP + diphosphate + H(+). It functions in the pathway amino-acid biosynthesis; L-asparagine biosynthesis; L-asparagine from L-aspartate (L-Gln route): step 1/1. This is Asparagine synthetase [glutamine-hydrolyzing] (ASNS) from Mesocricetus auratus (Golden hamster).